Reading from the N-terminus, the 681-residue chain is Structure-specific endonuclease subunit SLX4 (681 aa).

2 disordered regions span residues 239–305 (EREK…QEQL) and 505–528 (EVTGEAEDGPSIIQVPSSPGNENL). Positions 251-261 (SDSSPEPTQLL) are enriched in polar residues. Acidic residues predominate over residues 265 to 281 (IIEEEHEVDEEEEDNEN). Composition is skewed to polar residues over residues 288-305 (QLASSPTQISSDDTQEQL) and 518-528 (QVPSSPGNENL).

Belongs to the SLX4 family. Forms a heterodimer with SLX1. In terms of processing, phosphorylated in response to DNA damage.

The protein resides in the nucleus. Regulatory subunit of the SLX1-SLX4 structure-specific endonuclease that resolves DNA secondary structures generated during DNA repair and recombination. Has endonuclease activity towards branched DNA substrates, introducing single-strand cuts in duplex DNA close to junctions with ss-DNA. This Meyerozyma guilliermondii (strain ATCC 6260 / CBS 566 / DSM 6381 / JCM 1539 / NBRC 10279 / NRRL Y-324) (Yeast) protein is Structure-specific endonuclease subunit SLX4.